Here is a 381-residue protein sequence, read N- to C-terminus: uncharacterized protein (381 aa).

The next 9 membrane-spanning stretches (helical) occupy residues 59-79, 84-104, 147-167, 190-210, 222-242, 250-270, 284-304, 311-331, and 344-364; these read LITL…LYYM, GVAP…YQTM, VGVN…FFMA, SMMA…FNTI, LVLL…TFSI, ILTN…SIYW, HYFM…LILA, LSPI…IYKF, and VYFF…VTSL.

This sequence belongs to the CDP-alcohol phosphatidyltransferase class-I family.

It is found in the membrane. This is an uncharacterized protein from Dictyostelium discoideum (Social amoeba).